We begin with the raw amino-acid sequence, 614 residues long: METVDTSERLTRLRQLMQERKVDVYIVPSEDSHQSEYIAPCDGRREFISGFSGSAGTAIISMTKAALSTDGRYFNQASKQLDSNWALLKRGVEGFPTWQEWTTEQAEGGKVVGVDPALVTPAGARSLSETLKKNGSSLVGVEQNLVDLVWGKDRPAPPREAVRVHPAQYAGKSFQEKISDLRKELENKKAAGIVISMLDEIAWLFNLRGTDIPYNPVFFSYALITPTTVDLYVDEDKLTPEVKAHLGQDVVIKPYDSIFADAKALSEARKQDATGAAPKFLLSNKASWALSLSLGGEEQVEEVRSPIADAKAIKNDVELAGMRSCHVRDGAALIEYFAWLENELINKKTTLDEVDAADKLEQIRSKHDLYAGLSFDTISSTGPNGAVIHYKPEKGSCSIIDPTAIYLCDSGAQYLDGTTDVTRTFHFGNPTDLEKKAFTLVLKGLISIDTAVFPKGTSGFALDALARQFLWKEGLDYLHGTGHGIGSYLNVHEGPMGIGTRVQYTEVPIAAGNVISDEPGFYEDGKFGIRIENVIMAREVQTTHKFGEKPWLGFEHVTTAPLGRNLINATLLSEDELKWVNEYHAEVWEKTHRFFENDDYTRSWLQRETQPISK.

Aspartate 409, aspartate 420, glutamate 518, and glutamate 532 together coordinate Mn(2+).

This sequence belongs to the peptidase M24B family. Mn(2+) is required as a cofactor.

The catalysed reaction is Release of any N-terminal amino acid, including proline, that is linked to proline, even from a dipeptide or tripeptide.. Functionally, catalyzes the removal of a penultimate prolyl residue from the N-termini of peptides. This is Probable Xaa-Pro aminopeptidase P (ampp) from Aspergillus niger (strain ATCC MYA-4892 / CBS 513.88 / FGSC A1513).